We begin with the raw amino-acid sequence, 133 residues long: Small ribosomal subunit protein eS24z (133 aa).

The interval 104–133 (KSRKQIKERKNRAKKIRGVKKTKAGDAKKK) is disordered. Residues 109 to 125 (IKERKNRAKKIRGVKKT) show a composition bias toward basic residues.

The protein belongs to the eukaryotic ribosomal protein eS24 family.

In Arabidopsis thaliana (Mouse-ear cress), this protein is Small ribosomal subunit protein eS24z (RPS24A).